The chain runs to 3146 residues: Bassianolide nonribosomal cyclodepsipeptide synthetase (3146 aa).

A compositionally biased stretch (polar residues) spans 1–12 (MEPPNNANTGQL). The disordered stretch occupies residues 1–23 (MEPPNNANTGQLGPTLPNGTVDL). The condensation 1 stretch occupies residues 69–454 (HVVYEIPEDV…INKLQSTDGS (386 aa)). The interval 495–887 (GDTPNKPAVC…GRMDSQVKIR (393 aa)) is adenylation 1. The Carrier 1 domain maps to 1015–1091 (PDASAGVTKL…SLQAAIGGSS (77 aa)). S1052 carries the post-translational modification O-(pantetheine 4'-phosphoryl)serine. Residues 1109 to 1538 (SYSQGRLWFL…QTLISVVPLT (430 aa)) form a condensation 2 region. The adenylation 2 stretch occupies residues 1567-1973 (FRTQVASYPD…GRMDFQFKIR (407 aa)). Positions 2041–2181 (TYTELDTVSS…FPTRDYLERV (141 aa)) are S-adenosyl-L-methionine-dependent N-methyltransferase (MT). Carrier domains follow at residues 2514–2588 (FPLS…RQQL) and 2614–2688 (APTT…EVSQ). S2548 and S2648 each carry O-(pantetheine 4'-phosphoryl)serine. Residues 2734 to 3138 (QDVYLATHLQ…THLMEQVCNT (405 aa)) are condensation 3.

This sequence belongs to the NRP synthetase family.

The enzyme catalyses 4 (R)-2-hydroxy-3-methylbutanoate + 4 L-leucine + 4 S-adenosyl-L-methionine + 8 ATP = bassianolide + 8 AMP + 4 S-adenosyl-L-homocysteine + 8 diphosphate + 8 H(+). In terms of biological role, bassianolide nonribosomal synthetase that mediates the biosynthesis of bassianolide (BSL), a non-ribosomal cyclodepsipeptide that shows insecticidal and cancer cell antiproliferative activity. BSLS first catalyzes the iterative synthesis of an enzyme-bound dipeptidol monomer intermediate from D-2-hydroxyisovalerate and L-leucine before performing the condensation and cyclization of 4 dipeptidol monomers to yield the cyclic tetrameric ester bassianolide. The N-methyltransferase MT domain is responsible for the methylation of the leucine residues of bassianolide. BSLS is flexible with both the amino acid and hydroxyl acid precursors, and produces bassianolide as the major product (containing N-methyl-L-Leu), together with small amounts of beauvericin and its analogs beauvericins A-C (containing N-methyl-L-Phe). The sequence is that of Bassianolide nonribosomal cyclodepsipeptide synthetase from Beauveria bassiana (White muscardine disease fungus).